The sequence spans 368 residues: tRNA-specific 2-thiouridylase MnmA (368 aa).

ATP is bound by residues 12-19 and Met-38; that span reads GMSGGVDS. The tract at residues 98-100 is interaction with target base in tRNA; sequence NPD. Cys-103 serves as the catalytic Nucleophile. Cys-103 and Cys-200 form a disulfide bridge. Residue Gly-128 coordinates ATP. The segment at 150–152 is interaction with tRNA; sequence KDQ. The active-site Cysteine persulfide intermediate is Cys-200. Residues 311–312 are interaction with tRNA; that stretch reads RY.

Belongs to the MnmA/TRMU family.

The protein localises to the cytoplasm. It carries out the reaction S-sulfanyl-L-cysteinyl-[protein] + uridine(34) in tRNA + AH2 + ATP = 2-thiouridine(34) in tRNA + L-cysteinyl-[protein] + A + AMP + diphosphate + H(+). Catalyzes the 2-thiolation of uridine at the wobble position (U34) of tRNA, leading to the formation of s(2)U34. The protein is tRNA-specific 2-thiouridylase MnmA of Aeromonas salmonicida (strain A449).